The chain runs to 394 residues: NAD(P)H-quinone oxidoreductase subunit H (394 aa).

The protein belongs to the complex I 49 kDa subunit family. As to quaternary structure, NDH-1 can be composed of about 15 different subunits; different subcomplexes with different compositions have been identified which probably have different functions.

Its subcellular location is the cellular thylakoid membrane. The catalysed reaction is a plastoquinone + NADH + (n+1) H(+)(in) = a plastoquinol + NAD(+) + n H(+)(out). The enzyme catalyses a plastoquinone + NADPH + (n+1) H(+)(in) = a plastoquinol + NADP(+) + n H(+)(out). In terms of biological role, NDH-1 shuttles electrons from an unknown electron donor, via FMN and iron-sulfur (Fe-S) centers, to quinones in the respiratory and/or the photosynthetic chain. The immediate electron acceptor for the enzyme in this species is believed to be plastoquinone. Couples the redox reaction to proton translocation, and thus conserves the redox energy in a proton gradient. Cyanobacterial NDH-1 also plays a role in inorganic carbon-concentration. This is NAD(P)H-quinone oxidoreductase subunit H from Synechococcus sp. (strain CC9902).